We begin with the raw amino-acid sequence, 548 residues long: Chaperonin GroEL (548 aa).

Residues 30–33 (TLGP), K51, 87–91 (DGTTT), G415, and D495 contribute to the ATP site.

The protein belongs to the chaperonin (HSP60) family. As to quaternary structure, forms a cylinder of 14 subunits composed of two heptameric rings stacked back-to-back. Interacts with the co-chaperonin GroES.

It is found in the cytoplasm. It catalyses the reaction ATP + H2O + a folded polypeptide = ADP + phosphate + an unfolded polypeptide.. Together with its co-chaperonin GroES, plays an essential role in assisting protein folding. The GroEL-GroES system forms a nano-cage that allows encapsulation of the non-native substrate proteins and provides a physical environment optimized to promote and accelerate protein folding. The polypeptide is Chaperonin GroEL (Colwellia psychrerythraea (strain 34H / ATCC BAA-681) (Vibrio psychroerythus)).